The chain runs to 261 residues: 5'-nucleotidase SurE (261 aa).

Residues Asp8, Asp9, Ser39, and Asn94 each coordinate a divalent metal cation.

Belongs to the SurE nucleotidase family. Requires a divalent metal cation as cofactor.

It localises to the cytoplasm. It carries out the reaction a ribonucleoside 5'-phosphate + H2O = a ribonucleoside + phosphate. Its function is as follows. Nucleotidase that shows phosphatase activity on nucleoside 5'-monophosphates. The chain is 5'-nucleotidase SurE from Archaeoglobus fulgidus (strain ATCC 49558 / DSM 4304 / JCM 9628 / NBRC 100126 / VC-16).